The chain runs to 127 residues: Protein chibby homolog 1 (127 aa).

Residues 1-10 (MPLFGSTFSP) are compositionally biased toward polar residues. The disordered stretch occupies residues 1–26 (MPLFGSTFSPKKTPPRKSASLSNLHN). 2 positions are modified to phosphoserine: Ser-9 and Ser-20. Positions 60 to 112 (IAETGISGGVDRREAQRLRRRNQQLEEENNLLRLKVDILLDMLSETTAESHLM) are minimal region for the interaction with PKD2. Residues 68–125 (GVDRREAQRLRRRNQQLEEENNLLRLKVDILLDMLSETTAESHLMEKELDELKSVSRR) adopt a coiled-coil conformation. The tract at residues 77–98 (LRRRNQQLEEENNLLRLKVDIL) is leucine-zipper; mediates homodimerization.

This sequence belongs to the chibby family. In terms of assembly, homodimer. Homodimerization is essential for nuclear localization and interaction with KPNA4 but is dispensable for interaction with CTNNB1. Interacts with polycystin-2/PKD2 and GM130. Interacts with the C-terminal region of CTNNB1. Interacts (C-terminus) with TCIM (C-terminus), TCIM competes with CTNNB1 for the interaction with CBY1. Interacts with FAM92A; this interaction facilitates targeting of FAM92A to cilium basal body. Interacts with CIBAR2. Interacts with KPNA4.

The protein localises to the nucleus speckle. The protein resides in the cytoplasm. It is found in the cytoskeleton. Its subcellular location is the cilium basal body. It localises to the microtubule organizing center. The protein localises to the centrosome. The protein resides in the centriole. It is found in the golgi apparatus. Its subcellular location is the trans-Golgi network. It localises to the cell projection. The protein localises to the cilium. The protein resides in the flagellum. It is found in the nucleus. Inhibits the Wnt/Wingless pathway by binding to CTNNB1/beta-catenin and inhibiting beta-catenin-mediated transcriptional activation through competition with TCF/LEF transcription factors. Has also been shown to play a role in regulating the intracellular trafficking of polycystin-2/PKD2 and possibly of other intracellular proteins. Promotes adipocyte and cardiomyocyte differentiation. The sequence is that of Protein chibby homolog 1 (CBY1) from Bos taurus (Bovine).